Here is a 137-residue protein sequence, read N- to C-terminus: Small ribosomal subunit protein uS9 (137 aa).

Residues 105–137 (LKTEGYLKRDPRAVERKKYGLRKARKAPQYSKR) form a disordered region. The segment covering 109–122 (GYLKRDPRAVERKK) has biased composition (basic and acidic residues). Residues 123–137 (YGLRKARKAPQYSKR) are compositionally biased toward basic residues.

Belongs to the universal ribosomal protein uS9 family.

In Synechococcus sp. (strain JA-3-3Ab) (Cyanobacteria bacterium Yellowstone A-Prime), this protein is Small ribosomal subunit protein uS9.